Consider the following 254-residue polypeptide: Hydrolase tropI (254 aa).

Active-site residues include C141, D187, and H219.

It belongs to the dienelactone hydrolase family.

It functions in the pathway secondary metabolite biosynthesis. Hydrolase; part of the gene cluster that mediates the biosynthesis of the tropolone class of fungal maleic anhydrides. The pathway begins with the synthesis of 3-methylorcinaldehyde by the non-reducing polyketide synthase (PKS) tropA. 3-methylorcinaldehyde is the substrate for the FAD-dependent monooxygenase tropB to yield a dearomatized hydroxycyclohexadione. The 2-oxoglutarate-dependent dioxygenase tropC then performs the oxidative ring expansion to provide the first tropolone metabolite stipitaldehyde. Trop D converts stipitaldehyde into stipitacetal which is in turn converted to stipitalide by the short-chain dehydrogenase/reductase tropE. The next steps involve tropF, tropG, tropH, tropI and tropJ to form successive tropolone maleic anhydrides including stipitaldehydic, stipitatonic and stipitatic acids. This is Hydrolase tropI from Talaromyces stipitatus (strain ATCC 10500 / CBS 375.48 / QM 6759 / NRRL 1006) (Penicillium stipitatum).